Consider the following 924-residue polypeptide: Periplasmic nitrate reductase (924 aa).

Positions 1–30 form a signal peptide, tat-type signal; that stretch reads MNRRDFIKNTAIASAASVAGLSVPSSMLGA. The 4Fe-4S Mo/W bis-MGD-type domain occupies 35 to 91; that stretch reads WKWDKAVCRFCGTGCGIMIARKDGKIVATKGDPAAPVNRGLNCIKGYFNAKIMYGED. Positions 42, 45, 49, and 77 each coordinate [4Fe-4S] cluster. Mo-bis(molybdopterin guanine dinucleotide) is bound by residues K79, Q147, N172, C176, 209–216, M417, Q421, N527, 552–553, K575, D602, and 814–823; these read WGANMAEM, SD, and TGRVLEHWHS. Residue W890 coordinates substrate. N898 and K915 together coordinate Mo-bis(molybdopterin guanine dinucleotide).

This sequence belongs to the prokaryotic molybdopterin-containing oxidoreductase family. NasA/NapA/NarB subfamily. In terms of assembly, component of the periplasmic nitrate reductase NapAB complex composed of NapA and NapB. The cofactor is [4Fe-4S] cluster. Requires Mo-bis(molybdopterin guanine dinucleotide) as cofactor. In terms of processing, predicted to be exported by the Tat system. The position of the signal peptide cleavage has not been experimentally proven.

It is found in the periplasm. It catalyses the reaction 2 Fe(II)-[cytochrome] + nitrate + 2 H(+) = 2 Fe(III)-[cytochrome] + nitrite + H2O. Functionally, catalytic subunit of the periplasmic nitrate reductase complex NapAB. Receives electrons from NapB and catalyzes the reduction of nitrate to nitrite. This is Periplasmic nitrate reductase from Campylobacter jejuni subsp. jejuni serotype O:2 (strain ATCC 700819 / NCTC 11168).